Reading from the N-terminus, the 256-residue chain is Homeobox-leucine zipper protein HOX18 (256 aa).

The interval 52-116 (YDHGRDEEQA…GGGGGGTRKK (65 aa)) is disordered. Over residues 102–112 (DGGSGGGGGGG) the composition is skewed to gly residues. The segment at residues 112–171 (GTRKKLQLTKEQSTLLEDSFRVHNILSHAQKHELARQLKLKPRQVEVWFQNRRARTKLKQ) is a DNA-binding region (homeobox). The segment at 170-214 (KQTEVDCEFLKRCCESLTEENKQLKHELMELRRLASPAAAAAGSQ) is leucine-zipper.

Belongs to the HD-ZIP homeobox family. Class II subfamily. Expressed in roots, leaf sheaths and blades and panicles.

Its subcellular location is the nucleus. Functionally, probable transcription factor. This Oryza sativa subsp. japonica (Rice) protein is Homeobox-leucine zipper protein HOX18 (HOX18).